A 414-amino-acid chain; its full sequence is Histidine--tRNA ligase (414 aa).

It belongs to the class-II aminoacyl-tRNA synthetase family. As to quaternary structure, homodimer.

Its subcellular location is the cytoplasm. The catalysed reaction is tRNA(His) + L-histidine + ATP = L-histidyl-tRNA(His) + AMP + diphosphate + H(+). The polypeptide is Histidine--tRNA ligase (Rickettsia rickettsii (strain Iowa)).